The chain runs to 548 residues: Chaperonin GroEL (548 aa).

ATP-binding positions include 30-33 (TLGP), Lys51, 87-91 (DGTTT), Gly415, 479-481 (NAA), and Asp495.

Belongs to the chaperonin (HSP60) family. In terms of assembly, forms a cylinder of 14 subunits composed of two heptameric rings stacked back-to-back. Interacts with the co-chaperonin GroES.

It is found in the cytoplasm. The enzyme catalyses ATP + H2O + a folded polypeptide = ADP + phosphate + an unfolded polypeptide.. Together with its co-chaperonin GroES, plays an essential role in assisting protein folding. The GroEL-GroES system forms a nano-cage that allows encapsulation of the non-native substrate proteins and provides a physical environment optimized to promote and accelerate protein folding. In Pseudomonas fluorescens (strain SBW25), this protein is Chaperonin GroEL.